A 498-amino-acid polypeptide reads, in one-letter code: WD repeat-containing protein 55 homolog (498 aa).

The tract at residues 1–131 (MHTHNNFKTP…ATFDLDEDDE (131 aa)) is disordered. Composition is skewed to acidic residues over residues 12–23 (DEDELDDLDEDM) and 31–48 (IEQE…EYDL). Composition is skewed to low complexity over residues 67 to 82 (NDSS…NAAD) and 93 to 103 (AGGVTAGGATS). WD repeat units follow at residues 154–193 (KLED…NKLL), 198–237 (VHSK…LKKL), 241–279 (AHDD…AIFE), 282–321 (ELED…MYVQ), 324–363 (PYEE…YHCD), and 408–447 (QHNM…DFGD). Positions 478 to 498 (DLTKENADGDDDPGAGPSNMA) are disordered.

This sequence belongs to the WD repeat WDR55 family.

The polypeptide is WD repeat-containing protein 55 homolog (Drosophila melanogaster (Fruit fly)).